Consider the following 81-residue polypeptide: ATP synthase subunit c (81 aa).

Helical transmembrane passes span 7 to 27 (AASVLAAALAVGLAAIGPGIG) and 57 to 77 (LAFMEALTIYGLVVALVLLFA).

The protein belongs to the ATPase C chain family. As to quaternary structure, F-type ATPases have 2 components, F(1) - the catalytic core - and F(0) - the membrane proton channel. F(1) has five subunits: alpha(3), beta(3), gamma(1), delta(1), epsilon(1). F(0) has four main subunits: a(1), b(1), b'(1) and c(10-14). The alpha and beta chains form an alternating ring which encloses part of the gamma chain. F(1) is attached to F(0) by a central stalk formed by the gamma and epsilon chains, while a peripheral stalk is formed by the delta, b and b' chains.

The protein localises to the cellular thylakoid membrane. Its function is as follows. F(1)F(0) ATP synthase produces ATP from ADP in the presence of a proton or sodium gradient. F-type ATPases consist of two structural domains, F(1) containing the extramembraneous catalytic core and F(0) containing the membrane proton channel, linked together by a central stalk and a peripheral stalk. During catalysis, ATP synthesis in the catalytic domain of F(1) is coupled via a rotary mechanism of the central stalk subunits to proton translocation. In terms of biological role, key component of the F(0) channel; it plays a direct role in translocation across the membrane. A homomeric c-ring of between 10-14 subunits forms the central stalk rotor element with the F(1) delta and epsilon subunits. The sequence is that of ATP synthase subunit c from Nostoc sp. (strain PCC 7120 / SAG 25.82 / UTEX 2576).